Consider the following 96-residue polypeptide: Large ribosomal subunit protein bL27 (96 aa).

Residues 1-10 (MLLKLNIQLF) constitute a propeptide that is removed on maturation.

Belongs to the bacterial ribosomal protein bL27 family. The N-terminus is cleaved by ribosomal processing cysteine protease Prp.

In Phytoplasma mali (strain AT), this protein is Large ribosomal subunit protein bL27.